The chain runs to 488 residues: 3-octaprenyl-4-hydroxybenzoate carboxy-lyase (488 aa).

Asparagine 172 contacts Mn(2+). Residues 175-177, 189-191, and 194-195 each bind prenylated FMN; these read IYR, RWL, and RG. Glutamate 238 lines the Mn(2+) pocket. The active-site Proton donor is the aspartate 287.

This sequence belongs to the UbiD family. In terms of assembly, homohexamer. The cofactor is prenylated FMN. It depends on Mn(2+) as a cofactor.

It localises to the cell membrane. It catalyses the reaction a 4-hydroxy-3-(all-trans-polyprenyl)benzoate + H(+) = a 2-(all-trans-polyprenyl)phenol + CO2. The protein operates within cofactor biosynthesis; ubiquinone biosynthesis. Catalyzes the decarboxylation of 3-octaprenyl-4-hydroxy benzoate to 2-octaprenylphenol, an intermediate step in ubiquinone biosynthesis. The chain is 3-octaprenyl-4-hydroxybenzoate carboxy-lyase from Stutzerimonas stutzeri (strain A1501) (Pseudomonas stutzeri).